Here is a 205-residue protein sequence, read N- to C-terminus: RNA pyrophosphohydrolase (205 aa).

The region spanning 6-149 is the Nudix hydrolase domain; sequence GFRPNVGIVL…KRGVYARALR (144 aa). Positions 38–59 match the Nudix box motif; the sequence is GGMNTDETPVEAMYRELREETG. The tract at residues 177–205 is disordered; it reads PGSSAAGHDSPRKRPRKRSGARPMRINND. Residues 187–196 are compositionally biased toward basic residues; the sequence is PRKRPRKRSG.

The protein belongs to the Nudix hydrolase family. RppH subfamily. It depends on a divalent metal cation as a cofactor.

Accelerates the degradation of transcripts by removing pyrophosphate from the 5'-end of triphosphorylated RNA, leading to a more labile monophosphorylated state that can stimulate subsequent ribonuclease cleavage. This is RNA pyrophosphohydrolase from Xanthomonas oryzae pv. oryzae (strain MAFF 311018).